A 165-amino-acid polypeptide reads, in one-letter code: Mid1-interacting protein 1-like (165 aa).

The segment at 46–67 (DQESHASVSHNNNNNNEPSFPN) is disordered.

It belongs to the SPOT14 family.

It is found in the nucleus. The protein localises to the cytoplasm. The protein resides in the cytoskeleton. Involved in stabilization of microtubules. May play a role in the regulation of lipogenesis. The chain is Mid1-interacting protein 1-like from Danio rerio (Zebrafish).